The chain runs to 1003 residues: X-linked retinitis pigmentosa GTPase regulator (1003 aa).

6 RCC1 repeats span residues 54-105, 106-158, 159-208, 209-261, 262-313, and 314-367; these read NKLY…STEG, GKVY…LTED, GELF…VTTE, GQLY…LTEK, AVYT…ITDM, and GLMY…FATP. Ser-418 bears the Phosphoserine mark. A disordered region spans residues 460–495; sequence TPEKEGLTQPEPDYFRDNMAKGKETDNSSATDSESL. Basic and acidic residues predominate over residues 472–485; it reads DYFRDNMAKGKETD. Positions 486-495 are enriched in polar residues; the sequence is NSSATDSESL. Ser-520 carries the phosphoserine modification. 4 disordered regions span residues 625 to 657, 691 to 760, 794 to 932, and 968 to 1003; these read FKAI…LAEM, ESKD…TDQN, LSEI…DVKK, and AFKG…CTIL. Over residues 693 to 715 the composition is skewed to basic and acidic residues; sequence KDFVKDSRRNKQDVIFDSERESI. Acidic residues-rich tracts occupy residues 716–726 and 797–821; these read EEPDSYLEGES and IPEE…EANE. A compositionally biased stretch (basic and acidic residues) spans 827-848; sequence AGKEEKEIEILSDDLTDRAEDH. Residues 849 to 867 are compositionally biased toward acidic residues; that stretch reads EFSEDEEPEDMAEELDEDL. Residues 882 to 896 show a composition bias toward basic and acidic residues; it reads SLKKDETTKQEKRAI. The segment covering 913-924 has biased composition (low complexity); the sequence is SSSSEVLNDSES. The span at 978–989 shows a compositional bias: polar residues; sequence QNHMGQNHQDTS. Cys-1000 bears the Cysteine methyl ester mark. Cys-1000 is lipidated: S-geranylgeranyl cysteine. Positions 1001–1003 are cleaved as a propeptide — removed in mature form; it reads TIL.

As to quaternary structure, interacts with PDE6D. Interacts with RPGRIP1. Interacts with RPGRIP1L. PDE6D, RPGRIP1 and RPGRIP1L may compete for the same binding sites. Interacts with NPM1. Interacts with SMC1A and SMC3. Interacts with CEP290. Interacts with WHRN. Interacts with SPATA7. Interacts with RAB37 and RAB8A (in GDP-bound forms); functions as GEF for RAB37 and RAB8A. In terms of processing, prenylated. Isoform 1 is expressed exclusively in testis. Isoforms 2, 3 and 4 are widely expressed.

It localises to the golgi apparatus. It is found in the cell projection. The protein resides in the cilium. The protein localises to the cytoplasm. Its subcellular location is the cytoskeleton. It localises to the cilium basal body. It is found in the microtubule organizing center. The protein resides in the centrosome. The protein localises to the cilium axoneme. Its subcellular location is the flagellum axoneme. In terms of biological role, acts as a guanine-nucleotide releasing factor (GEF) for RAB8A and RAB37 by promoting the conversion of inactive RAB-GDP to the active form RAB-GTP. GEF activity towards RAB8A may facilitate ciliary trafficking by modulating ciliary intracellular localization of RAB8A. GEF activity towards RAB37 maintains autophagic homeostasis and retinal function. Involved in photoreceptor integrity. May control cilia formation by regulating actin stress filaments and cell contractility. May be involved in microtubule organization and regulation of transport in primary cilia. May play a critical role in spermatogenesis and in intraflagellar transport processes. The polypeptide is X-linked retinitis pigmentosa GTPase regulator (RPGR) (Canis lupus familiaris (Dog)).